The chain runs to 396 residues: Elongation factor Tu (396 aa).

The region spanning 10–206 (KAHVNIGTIG…AVDEYIPDPV (197 aa)) is the tr-type G domain. A G1 region spans residues 19 to 26 (GHVDHGKT). 19 to 26 (GHVDHGKT) serves as a coordination point for GTP. Residue T26 coordinates Mg(2+). The tract at residues 62–66 (GITIN) is G2. Positions 83–86 (DAPG) are G3. GTP contacts are provided by residues 83–87 (DAPGH) and 138–141 (NKSD). Positions 138-141 (NKSD) are G4. The segment at 176–178 (SAL) is G5.

It belongs to the TRAFAC class translation factor GTPase superfamily. Classic translation factor GTPase family. EF-Tu/EF-1A subfamily. Monomer.

Its subcellular location is the cytoplasm. The catalysed reaction is GTP + H2O = GDP + phosphate + H(+). Its function is as follows. GTP hydrolase that promotes the GTP-dependent binding of aminoacyl-tRNA to the A-site of ribosomes during protein biosynthesis. The chain is Elongation factor Tu from Micrococcus luteus (Micrococcus lysodeikticus).